Consider the following 505-residue polypeptide: Ribosomal RNA small subunit methyltransferase F (505 aa).

Residues 123–129 (ASAPGSK), glutamate 147, aspartate 174, and aspartate 192 contribute to the S-adenosyl-L-methionine site. Cysteine 245 functions as the Nucleophile in the catalytic mechanism. Positions 409–437 (GTNANNNSNTNPNNNANTNPNNNSNTNPR) are disordered. The segment covering 410-435 (TNANNNSNTNPNNNANTNPNNNSNTN) has biased composition (low complexity).

This sequence belongs to the class I-like SAM-binding methyltransferase superfamily. RsmB/NOP family.

The protein localises to the cytoplasm. It carries out the reaction cytidine(1407) in 16S rRNA + S-adenosyl-L-methionine = 5-methylcytidine(1407) in 16S rRNA + S-adenosyl-L-homocysteine + H(+). Specifically methylates the cytosine at position 1407 (m5C1407) of 16S rRNA. This chain is Ribosomal RNA small subunit methyltransferase F, found in Shewanella denitrificans (strain OS217 / ATCC BAA-1090 / DSM 15013).